Here is a 234-residue protein sequence, read N- to C-terminus: Coiled-coil domain-containing protein 194 (234 aa).

The signal sequence occupies residues Met-1–Ala-43. Residues Arg-44 to Ser-63 form a disordered region. A coiled-coil region spans residues Val-67–Ala-171. Positions Gly-194–Gln-234 are disordered. Residues Arg-203–Lys-219 show a composition bias toward basic residues.

In Mus musculus (Mouse), this protein is Coiled-coil domain-containing protein 194.